Reading from the N-terminus, the 267-residue chain is Neural/ectodermal development factor IMP-L2 (267 aa).

Residues 1–25 (MEAKMNLHVCALALLLFGSIATVRG) form the signal peptide. Ig-like C2-type domains lie at 48-149 (PRNR…KTIY) and 174-260 (PRII…TFVY). 2 disulfide bridges follow: Cys-80–Cys-139 and Cys-195–Cys-244.

In terms of tissue distribution, detected in several sites including the ventral neuroectoderm, the tracheal pits, the pharynx and esophagus, and specific neuronal cell bodies, where it is primarily expressed.

The protein resides in the secreted. The protein localises to the extracellular space. Its function is as follows. Essential developmental role during embryogenesis, in particular the normal development of the nervous system. May be involved in some aspect of cell adhesion. This chain is Neural/ectodermal development factor IMP-L2 (ImpL2), found in Drosophila melanogaster (Fruit fly).